The primary structure comprises 215 residues: uncharacterized protein (215 aa).

Catalysis depends on charge relay system residues serine 114, aspartate 162, and histidine 194.

Belongs to the AB hydrolase superfamily. AB hydrolase 2 family.

This is an uncharacterized protein from Rickettsia prowazekii (strain Madrid E).